Reading from the N-terminus, the 383-residue chain is 8-amino-7-oxononanoate synthase (383 aa).

Substrate-binding residues include Arg-27 and Arg-34. 114–115 (GY) is a binding site for pyridoxal 5'-phosphate. His-139 contacts substrate. Pyridoxal 5'-phosphate contacts are provided by residues Ser-187, 212–215 (DDAH), and 232–235 (TLSK). An N6-(pyridoxal phosphate)lysine modification is found at Lys-235. Thr-344 is a binding site for substrate.

The protein belongs to the class-II pyridoxal-phosphate-dependent aminotransferase family. BioF subfamily. In terms of assembly, homodimer. Pyridoxal 5'-phosphate is required as a cofactor.

It carries out the reaction 6-carboxyhexanoyl-[ACP] + L-alanine + H(+) = (8S)-8-amino-7-oxononanoate + holo-[ACP] + CO2. It participates in cofactor biosynthesis; biotin biosynthesis. Functionally, catalyzes the decarboxylative condensation of pimeloyl-[acyl-carrier protein] and L-alanine to produce 8-amino-7-oxononanoate (AON), [acyl-carrier protein], and carbon dioxide. The sequence is that of 8-amino-7-oxononanoate synthase from Methylorubrum extorquens (strain CM4 / NCIMB 13688) (Methylobacterium extorquens).